The primary structure comprises 430 residues: Dihydroorotase (430 aa).

Zn(2+) contacts are provided by His-57 and His-59. Residues 59–61 (HLR) and Asn-91 each bind substrate. 3 residues coordinate Zn(2+): Asp-151, His-178, and His-231. Asn-277 serves as a coordination point for substrate. Residue Asp-304 participates in Zn(2+) binding. The active site involves Asp-304. Substrate is bound by residues His-308 and 322 to 323 (PG).

It belongs to the metallo-dependent hydrolases superfamily. DHOase family. Class I DHOase subfamily. The cofactor is Zn(2+).

It carries out the reaction (S)-dihydroorotate + H2O = N-carbamoyl-L-aspartate + H(+). The protein operates within pyrimidine metabolism; UMP biosynthesis via de novo pathway; (S)-dihydroorotate from bicarbonate: step 3/3. Catalyzes the reversible cyclization of carbamoyl aspartate to dihydroorotate. The polypeptide is Dihydroorotase (Mycobacterium leprae (strain TN)).